Here is a 1492-residue protein sequence, read N- to C-terminus: Copper-transporting ATPase 1 (1492 aa).

The Cytoplasmic portion of the chain corresponds to 1-645 (MEPNMDANSI…KREIKQWRGS (645 aa)). 2 HMA domains span residues 8–74 (NSIT…FDAL) and 85–151 (TNTV…LDMG). T18, C19, and C22 together coordinate Cu(+). T152 carries the phosphothreonine modification. The HMA 3 domain occupies 171–237 (VLLKMRVEGM…QIEAVGFPAF (67 aa)). The Cu(+) site is built by C182 and C185. The residue at position 270 (S270) is a Phosphoserine. Positions 277 to 343 (SAITFTIDGM…AIEAVSPGQY (67 aa)) constitute an HMA 4 domain. Cu(+)-binding residues include C288 and C291. Phosphothreonine is present on T327. S339, S353, S357, and S362 each carry phosphoserine. 3 consecutive HMA domains span residues 377–443 (QEVV…FDAV), 480–546 (NKCY…FGAV), and 556–622 (GILE…FEAS). Residues C388, C391, C491, C494, C567, and C570 each coordinate Cu(+). The helical transmembrane segment at 646 to 667 (FLVSLFFCIPVMGLMIYMMVMD) threads the bilayer. Residues 668-706 (HHLATLNHNQNMSNEEMINMHSSMFLERQILPGLSIMNL) are Extracellular-facing. N-linked (GlcNAc...) asparagine glycosylation occurs at N678. A helical membrane pass occupies residues 707-726 (LSLLLCLPVQFCGGWYFYIQ). Residues 727 to 733 (AYKALRH) are Cytoplasmic-facing. Residues 734 to 754 (KTANMDVLIVLATTIAFAYSL) traverse the membrane as a helical segment. The Extracellular portion of the chain corresponds to 755–773 (VILLVAMYERAKVNPITFF). The chain crosses the membrane as a helical span at residues 774–794 (DTPPMLFVFIALGRWLEHIAK). The Cytoplasmic portion of the chain corresponds to 795–927 (GKTSEALAKL…SKAPIQQFAD (133 aa)). The chain crosses the membrane as a helical span at residues 928 to 951 (KLSGYFVPFIVLVSIVTLLVWIII). At 952-981 (GFQNFEIVEAYFPGYNRSISRTETIIRFAF) the chain is on the extracellular side. A helical membrane pass occupies residues 982-1003 (QASITVLCIACPCSLGLATPTA). At 1004–1348 (VMVGTGVGAQ…LSRKTVKRIR (345 aa)) the chain is on the cytoplasmic side. D1036 functions as the 4-aspartylphosphate intermediate in the catalytic mechanism. E1073 contributes to the ATP binding site. Position 1204 is a phosphothreonine (T1204). The Mg(2+) site is built by D1293 and D1297. The helical transmembrane segment at 1349 to 1366 (INFVFALIYNLIGIPIAA) threads the bilayer. At 1367–1377 (GVFLPIGLVLQ) the chain is on the extracellular side. A helical transmembrane segment spans residues 1378-1397 (PWMGSAAMAASSVSVVLSSL). Over 1398–1492 (FLKLYRKPTY…DFREDDDTTL (95 aa)) the chain is Cytoplasmic. Residues S1422, S1424, S1452, S1455, and S1458 each carry the phosphoserine modification. An Endocytosis signal motif is present at residues 1459–1460 (LL). 4 positions are modified to phosphoserine: S1461, S1465, S1468, and S1478. The PDZD11-binding stretch occupies residues 1478–1492 (SLLVGDFREDDDTTL). The Endocytosis signal signature appears at 1479–1480 (LL).

Belongs to the cation transport ATPase (P-type) (TC 3.A.3) family. Type IB subfamily. Monomer. Interacts with PDZD11. Interacts with ATOX1 and COMMD1. Interacts with TYRP1. Directly interacts with SOD3; this interaction is copper-dependent and is required for SOD3 activity. Expressed in hippocampal neuron (at protein level). Expressed in anterior pituitary gland (at protein level).

It is found in the golgi apparatus. The protein localises to the trans-Golgi network membrane. It localises to the cell membrane. The protein resides in the melanosome membrane. Its subcellular location is the early endosome membrane. It is found in the cell projection. The protein localises to the axon. It localises to the dendrite. The protein resides in the postsynaptic density. The catalysed reaction is Cu(+)(in) + ATP + H2O = Cu(+)(out) + ADP + phosphate + H(+). Its function is as follows. ATP-driven copper (Cu(+)) ion pump that plays an important role in intracellular copper ion homeostasis. Within a catalytic cycle, acquires Cu(+) ion from donor protein on the cytoplasmic side of the membrane and delivers it to acceptor protein on the lumenal side. The transfer of Cu(+) ion across the membrane is coupled to ATP hydrolysis and is associated with a transient phosphorylation that shifts the pump conformation from inward-facing to outward-facing state. Under physiological conditions, at low cytosolic copper concentration, it is localized at the trans-Golgi network (TGN) where it transfers Cu(+) ions to cuproenzymes of the secretory pathway. Upon elevated cytosolic copper concentrations, it relocalizes to the plasma membrane where it is responsible for the export of excess Cu(+) ions. May play a dual role in neuron function and survival by regulating cooper efflux and neuronal transmission at the synapse as well as by supplying Cu(+) ions to enzymes such as PAM, TYR and SOD3. In the melanosomes of pigmented cells, provides copper cofactor to TYR to form an active TYR holoenzyme for melanin biosynthesis. In Rattus norvegicus (Rat), this protein is Copper-transporting ATPase 1.